The following is a 388-amino-acid chain: MSTNWRELFPTKLTFVIFLLYMSLFIGQGIFVTASQESNNSYGYNTVTVVLLTEVFKLIVSTCLYCRDNNLRSLVRDVQKDRNVLGLYMVPAFLYCLYNNLAFVNLATFDPTTYYLLLQLRVVVTGILFQIIFKKYLSQRQWISLILLTLGCMMKQVDFGSFYSDANDDSESAAIQQQLQSHNKTTSAETHAHGKNMSGFDFSLSAVFILAQTICSCLAGVYNEYLLKDKGADVNIFVQNVFMYLDSIVCNAVILLLRGELLDAFSPQNLGSIMRFSVLIIIVNNAAIGIVTSFFLKYMNSILKTFASALELLFTAVLCYFLFSIPIYMNTALAIAVVSYAIYLYTQSPVVNLGKVRPLSNLSDATTKSTDKRKLIDEEAAESDLDMV.

The next 10 membrane-spanning stretches (helical) occupy residues 13 to 33 (LTFVIFLLYMSLFIGQGIFVT), 46 to 66 (TVTVVLLTEVFKLIVSTCLYC), 84 to 104 (VLGLYMVPAFLYCLYNNLAFV), 113 to 133 (TYYLLLQLRVVVTGILFQIIF), 142 to 162 (WISLILLTLGCMMKQVDFGSF), 202 to 222 (FSLSAVFILAQTICSCLAGVY), 236 to 256 (IFVQNVFMYLDSIVCNAVILL), 276 to 296 (FSVLIIIVNNAAIGIVTSFFL), 309 to 329 (ALELLFTAVLCYFLFSIPIYM), and 331 to 351 (TALAIAVVSYAIYLYTQSPVV).

Belongs to the nucleotide-sugar transporter family.

It localises to the golgi apparatus membrane. UDP-galactose transporter involved in the synthesis of galactose-containing glycans. Plays a role in quiescence of the innate immune response, possibly by regulating glycosylation of the Toll pathway ligand spz. This is UDP-galactose transporter senju from Drosophila melanogaster (Fruit fly).